A 478-amino-acid polypeptide reads, in one-letter code: Proton-coupled amino acid transporter 2 (478 aa).

Composition is skewed to polar residues over residues 1-14 (MSVTKSARSPQVAT) and 26-37 (KLQSQDPSPANG). Residues 1-46 (MSVTKSARSPQVATPLNLDLPESAKKLQSQDPSPANGSSSESSKKT) are disordered. At 1-53 (MSVTKSARSPQVATPLNLDLPESAKKLQSQDPSPANGSSSESSKKTKGITGFQ) the chain is on the cytoplasmic side. A helical transmembrane segment spans residues 54–74 (TLVHLVKGNMGTGILGLPLAV). At 75-76 (KN) the chain is on the extracellular side. Residues 77-97 (AGILMGPLSLLVMGLIACHCM) traverse the membrane as a helical segment. Residues 98 to 143 (HILVRCAQRFCHRLNKPFMDYGDTVMHGLAFSPNAWLQNHAHWGRR) lie on the Cytoplasmic side of the membrane. The chain crosses the membrane as a helical span at residues 144 to 164 (VVSFFLIVTQLGFCCVYIVFL). The Extracellular portion of the chain corresponds to 165–192 (ADNLKQVVEAVNSTTISCHKNETVVLTP). Residues 193 to 213 (TMDSRLYMLSFLPVLGLLVFV) traverse the membrane as a helical segment. The Cytoplasmic portion of the chain corresponds to 214–217 (RNLR). Residues 218–238 (VLTIFSLLANISMLVSLVIIA) traverse the membrane as a helical segment. The Extracellular segment spans residues 239 to 259 (QYIIQEIPDASQLPLVASWKT). Residues 260 to 280 (YPLFFGTAIFSFESIGVVLPL) traverse the membrane as a helical segment. The Cytoplasmic segment spans residues 281–292 (ENKMKDARGFPT). Residues 293-313 (ILSLGMSIITTLYIAIGALGY) traverse the membrane as a helical segment. The Extracellular segment spans residues 314-340 (LRFGDDIKASITLNLPNCWLYQSVKLL). Residues 341-361 (YVVGILCTYALQFYVPAEIII) traverse the membrane as a helical segment. Topologically, residues 362-374 (PLAVSQVSKRWAL) are cytoplasmic. Residues 375–395 (PVDLSIRLALVCLTCMLAILI) traverse the membrane as a helical segment. Over 396–399 (PRLD) the chain is Extracellular. Residues 400–420 (LVLSLVGSVSSSALALIIPPL) form a helical membrane-spanning segment. At 421–441 (LEVVTYYGEGISPLTVTKDAL) the chain is on the cytoplasmic side. A helical membrane pass occupies residues 442 to 462 (ISILGFMGFVVGTYQALDELI). The Extracellular segment spans residues 463–478 (KSGNSPALSNSTMFIQ).

It belongs to the amino acid/polyamine transporter 2 family. Expressed in spinal cord, brain, testis, lung, heart, colon, spleen, kidney and muscle. Found in neuronal cell bodies in the anterior horn, in spinal cord brain stem, cerebellum, hippocampus, hypothalamus, rhinencephalon, cerebral cortex, and olfactory bulb in the brain. Also expressed in bone and fat tissues.

The protein resides in the cell membrane. Its subcellular location is the endoplasmic reticulum membrane. It localises to the recycling endosome membrane. It catalyses the reaction glycine(in) + H(+)(in) = glycine(out) + H(+)(out). The enzyme catalyses L-alanine(in) + H(+)(in) = L-alanine(out) + H(+)(out). It carries out the reaction D-alanine(in) + H(+)(in) = D-alanine(out) + H(+)(out). The catalysed reaction is L-proline(out) + H(+)(out) = L-proline(in) + H(+)(in). It catalyses the reaction D-proline(out) + H(+)(out) = D-proline(in) + H(+)(in). The enzyme catalyses 4-hydroxy-L-proline(in) + H(+)(in) = 4-hydroxy-L-proline(out) + H(+)(out). It carries out the reaction L-serine(in) + H(+)(in) = L-serine(out) + H(+)(out). The catalysed reaction is D-serine(out) + H(+)(out) = D-serine(in) + H(+)(in). It catalyses the reaction beta-alanine(in) + H(+)(in) = beta-alanine(out) + H(+)(out). The enzyme catalyses 4-aminobutanoate(in) + H(+)(in) = 4-aminobutanoate(out) + H(+)(out). It carries out the reaction sarcosine(in) + H(+)(in) = sarcosine(out) + H(+)(out). The catalysed reaction is N,N-dimethylglycine(in) + H(+)(in) = N,N-dimethylglycine(out) + H(+)(out). Its function is as follows. Electrogenic proton/amino acid symporter with a high selectivity for the small side chains amino acids glycine, alanine and proline, where both L- and D-enantiomers are transported. Extension of the backbone length, as in beta-alanine and 4-aminobutanoate or methylation of the amino group, as in sarcosine and N,N-dimethylglycine, are also tolerated but decrease transport efficiency. A free carboxyl group is preferred. The polypeptide is Proton-coupled amino acid transporter 2 (Mus musculus (Mouse)).